The primary structure comprises 234 residues: 3-deoxy-manno-octulosonate cytidylyltransferase (234 aa).

Belongs to the KdsB family.

The protein resides in the cytoplasm. It carries out the reaction 3-deoxy-alpha-D-manno-oct-2-ulosonate + CTP = CMP-3-deoxy-beta-D-manno-octulosonate + diphosphate. It functions in the pathway nucleotide-sugar biosynthesis; CMP-3-deoxy-D-manno-octulosonate biosynthesis; CMP-3-deoxy-D-manno-octulosonate from 3-deoxy-D-manno-octulosonate and CTP: step 1/1. The protein operates within bacterial outer membrane biogenesis; lipopolysaccharide biosynthesis. Its function is as follows. Activates KDO (a required 8-carbon sugar) for incorporation into bacterial lipopolysaccharide in Gram-negative bacteria. The protein is 3-deoxy-manno-octulosonate cytidylyltransferase of Aquifex aeolicus (strain VF5).